A 448-amino-acid polypeptide reads, in one-letter code: GA-binding protein subunit beta-2 (448 aa).

ANK repeat units lie at residues 5 to 34, 37 to 66, 70 to 99, 103 to 132, and 136 to 166; these read DLGKRLLEAARKGQDDEVRTLMANGAPFTT, LGTSPLHLAAQYGHYSTAEVLLRAGVSRDA, VDRTPLHMAAADGHAHIVELLVRNGADVNA, LKMTALHWATERHHRDVVELLIKYGADVHA, and FDKSAFDIALEKNNAEILVILQEAMQNQVNV. Ser256 is modified (phosphoserine). Disordered stretches follow at residues 325–354 and 420–448; these read EEEEKLPLTKKPRIGEKTNSVEESKEGNER and ELEERETKVTGSAGTTEPHTRVSMATVSS. Basic and acidic residues predominate over residues 337–354; that stretch reads RIGEKTNSVEESKEGNER. Residues 345–395 are a coiled coil; that stretch reads VEESKEGNERELLQQQLQEANRRAQEYRHQLLKKEQEAEQYRLKLEAIARQ. Positions 428-448 are enriched in polar residues; the sequence is VTGSAGTTEPHTRVSMATVSS.

In terms of assembly, heterotetramer of two alpha and two beta subunits. The C-terminal is necessary for the formation of a heterotetrameric GABP-alpha-2/beta-2 complex, and also facilitates homotypic dimerization. Interacts with ADGRB2.

The protein resides in the nucleus. In terms of biological role, may function as transcription factor capable of interacting with purine rich repeats (GA repeats). The polypeptide is GA-binding protein subunit beta-2 (GABPB2) (Homo sapiens (Human)).